The primary structure comprises 252 residues: Ditrans,polycis-undecaprenyl-diphosphate synthase ((2E,6E)-farnesyl-diphosphate specific) (252 aa).

Aspartate 24 is a catalytic residue. A Mg(2+)-binding site is contributed by aspartate 24. Substrate is bound by residues 25 to 28 (GNGR), tryptophan 29, arginine 37, histidine 41, and 69 to 71 (SSE). The Proton acceptor role is filled by asparagine 72. Substrate is bound by residues tryptophan 73, arginine 75, and arginine 192. Histidine 197 serves as a coordination point for Mg(2+). 198–200 (RIS) lines the substrate pocket. Residue glutamate 211 participates in Mg(2+) binding.

Belongs to the UPP synthase family. In terms of assembly, homodimer. Mg(2+) serves as cofactor.

It catalyses the reaction 8 isopentenyl diphosphate + (2E,6E)-farnesyl diphosphate = di-trans,octa-cis-undecaprenyl diphosphate + 8 diphosphate. Catalyzes the sequential condensation of isopentenyl diphosphate (IPP) with (2E,6E)-farnesyl diphosphate (E,E-FPP) to yield (2Z,6Z,10Z,14Z,18Z,22Z,26Z,30Z,34E,38E)-undecaprenyl diphosphate (di-trans,octa-cis-UPP). UPP is the precursor of glycosyl carrier lipid in the biosynthesis of bacterial cell wall polysaccharide components such as peptidoglycan and lipopolysaccharide. The polypeptide is Ditrans,polycis-undecaprenyl-diphosphate synthase ((2E,6E)-farnesyl-diphosphate specific) (Yersinia pestis).